A 689-amino-acid polypeptide reads, in one-letter code: E3 ubiquitin-protein ligase RNF43 (689 aa).

A signal peptide spans 1 to 27 (MNRARLQLASLWLLLTVTLQAVASAMG). Over 28 to 191 (TTEREMDVKA…VQEQPKWLHH (164 aa)) the chain is Extracellular. N56 and N86 each carry an N-linked (GlcNAc...) asparagine glycan. C85 and C113 form a disulfide bridge. Residues 192 to 212 (DIWILLTVAGTVMFFVLYAVA) form a helical membrane-spanning segment. Residues 213 to 689 (RLLCRQPPPQ…EIEAVCEHAV (477 aa)) are Cytoplasmic-facing. The RING-type; atypical zinc-finger motif lies at 268–308 (CAICLEEFTDGQELRILPCCHEYHLGCVDPWLRQNHTCPLC). Disordered stretches follow at residues 386-430 (QMRT…HGSS), 445-467 (TSSS…ALAS), and 492-639 (VHFH…MSES). Composition is skewed to low complexity over residues 408–430 (DSSG…HGSS) and 446–461 (SSSS…EDSS). 2 stretches are compositionally biased toward basic residues: residues 492 to 504 (VHFH…HYRR) and 512 to 523 (SHPHRSKRRTKV). Over residues 574 to 588 (QQSMPQAASVVQGSS) the composition is skewed to polar residues.

It belongs to the ZNRF3 family.

The protein localises to the cell membrane. Its subcellular location is the endoplasmic reticulum membrane. It localises to the nucleus envelope. The catalysed reaction is S-ubiquitinyl-[E2 ubiquitin-conjugating enzyme]-L-cysteine + [acceptor protein]-L-lysine = [E2 ubiquitin-conjugating enzyme]-L-cysteine + N(6)-ubiquitinyl-[acceptor protein]-L-lysine.. The protein operates within protein modification; protein ubiquitination. Functionally, E3 ubiquitin-protein ligase that acts as a negative regulator of the Wnt signaling pathway by mediating the ubiquitination, endocytosis and subsequent degradation of Wnt receptor complex components Frizzled. Acts on both canonical and non-canonical Wnt signaling pathway. Along with RSPO2 and ZNRF3, constitutes a master switch that governs limb specification. In Xenopus tropicalis (Western clawed frog), this protein is E3 ubiquitin-protein ligase RNF43 (rnf43).